A 188-amino-acid polypeptide reads, in one-letter code: Deoxyuridine 5'-triphosphate nucleotidohydrolase (188 aa).

A disordered region spans residues 1–34; that stretch reads MGEMTSGVDGHGSTKRTTSEAQKMDFNTDRGSAI.

This sequence belongs to the dUTPase family. Mg(2+) is required as a cofactor.

It catalyses the reaction dUTP + H2O = dUMP + diphosphate + H(+). Functionally, this enzyme is involved in nucleotide metabolism: it produces dUMP, the immediate precursor of thymidine nucleotides and it decreases the intracellular concentration of dUTP so that uracil cannot be incorporated into DNA. This chain is Deoxyuridine 5'-triphosphate nucleotidohydrolase (49), found in Ictaluridae (bullhead catfishes).